The sequence spans 198 residues: COMM domain-containing protein 9 (198 aa).

Position 2 is an N-acetylalanine (Ala2). Residues 122–196 (RLVDLDWRVD…RIRDQLSAVA (75 aa)) form the COMM domain.

This sequence belongs to the COMM domain-containing protein 9 family. In terms of assembly, component of the commander complex consisting of the CCC subcomplex and the retriever subcomplex. Component of the CCC (COMMD/CCDC22/CCDC93) subcomplex consisting of COMMD1, COMMD2, COMMD3, COMMD4, COMMD5, COMMD6, COMMD7, COMMD8, COMMD9, COMMD10, CCDC22 and CCDC93; within the complex forms a heterodimer with COMMD7. Interacts with RELB and NFKB1/p105. Interacts with CCDC22, CCDC93, SCNN1B, CUL1.

Its subcellular location is the nucleus. It localises to the cytoplasmic vesicle. In terms of biological role, scaffold protein in the commander complex that is essential for endosomal recycling of transmembrane cargos; the commander complex is composed of the CCC subcomplex and the retriever subcomplex. May modulate activity of cullin-RING E3 ubiquitin ligase (CRL) complexes. May down-regulate activation of NF-kappa-B. Modulates Na(+) transport in epithelial cells by regulation of apical cell surface expression of amiloride-sensitive sodium channel (ENaC) subunits. The protein is COMM domain-containing protein 9 (Commd9) of Mus musculus (Mouse).